The sequence spans 433 residues: Serine--tRNA ligase (433 aa).

An L-serine-binding site is contributed by 235–237; the sequence is TSE. Position 266–268 (266–268) interacts with ATP; sequence RSE. Residue Glu-289 coordinates L-serine. 353 to 356 is a binding site for ATP; sequence EISS. Ser-388 lines the L-serine pocket.

Belongs to the class-II aminoacyl-tRNA synthetase family. Type-1 seryl-tRNA synthetase subfamily. In terms of assembly, homodimer. The tRNA molecule binds across the dimer.

The protein resides in the cytoplasm. It catalyses the reaction tRNA(Ser) + L-serine + ATP = L-seryl-tRNA(Ser) + AMP + diphosphate + H(+). It carries out the reaction tRNA(Sec) + L-serine + ATP = L-seryl-tRNA(Sec) + AMP + diphosphate + H(+). It participates in aminoacyl-tRNA biosynthesis; selenocysteinyl-tRNA(Sec) biosynthesis; L-seryl-tRNA(Sec) from L-serine and tRNA(Sec): step 1/1. Catalyzes the attachment of serine to tRNA(Ser). Is also able to aminoacylate tRNA(Sec) with serine, to form the misacylated tRNA L-seryl-tRNA(Sec), which will be further converted into selenocysteinyl-tRNA(Sec). This is Serine--tRNA ligase from Burkholderia orbicola (strain MC0-3).